Here is a 278-residue protein sequence, read N- to C-terminus: Trans-2,3-dihydro-3-hydroxyanthranilate isomerase (278 aa).

The active site involves Glu-45.

This sequence belongs to the PhzF family.

The enzyme catalyses (5S,6S)-6-amino-5-hydroxycyclohexa-1,3-diene-1-carboxyate = (1R,6S)-6-amino-5-oxocyclohex-2-ene-1-carboxylate. It participates in secondary metabolite biosynthesis; pyocyanine biosynthesis. Its function is as follows. Isomerase that catalyzes the condensation of two molecules of trans-2,3-dihydro-3-hydroxyanthranilic acid (DHHA) into the phenazine ring system. The final product is not yet known. This Pseudomonas aeruginosa (strain ATCC 15692 / DSM 22644 / CIP 104116 / JCM 14847 / LMG 12228 / 1C / PRS 101 / PAO1) protein is Trans-2,3-dihydro-3-hydroxyanthranilate isomerase (phzF1).